Here is a 949-residue protein sequence, read N- to C-terminus: ATPase 6, plasma membrane-type (949 aa).

Topologically, residues 1 to 64 are cytoplasmic; that stretch reads MAADISWDEI…EKVENKFLKF (64 aa). A helical transmembrane segment spans residues 65 to 84; it reads LGFMWNPLSWVMEAAAIMAI. The Extracellular segment spans residues 85 to 96; sequence VLANGGGRPPDW. The helical transmembrane segment at 97–117 threads the bilayer; it reads QDFVGITCLLIINSTISFIEE. The Cytoplasmic portion of the chain corresponds to 118-246; sequence NNAGNAAAAL…GHFQKVLTAI (129 aa). The helical transmembrane segment at 247-267 threads the bilayer; it reads GNFCICSIGIGMLIEIIIMYP. Over 268-276 the chain is Extracellular; it reads IQHRKYRDG. A helical transmembrane segment spans residues 277 to 294; the sequence is IDNLLVLLIGGIPIAMPT. The Cytoplasmic portion of the chain corresponds to 295–645; it reads VLSVTMAIGS…TSRAIFQRMK (351 aa). Catalysis depends on D332, which acts as the 4-aspartylphosphate intermediate. Residues D590 and D594 each contribute to the Mg(2+) site. Residues 646–667 traverse the membrane as a helical segment; sequence NYTIYAVSITIRIVLGFMLVAL. The Extracellular segment spans residues 668–672; that stretch reads IWEFD. Residues 673–695 form a helical membrane-spanning segment; sequence FSPFMVLIIAILNDGTIMTISKD. Over 696 to 711 the chain is Cytoplasmic; that stretch reads RVKPSPIPDSWKLKEI. The chain crosses the membrane as a helical span at residues 712-732; sequence FATGVVLGTYMALVTVVFFWL. The Extracellular segment spans residues 733 to 753; it reads AHDTTFFSDKFGVRSLQGKDE. Residues 754-774 form a helical membrane-spanning segment; it reads ELIAVLYLQVSIISQALIFVT. Topologically, residues 775–786 are cytoplasmic; sequence RSRSWSFVERPG. A helical transmembrane segment spans residues 787–807; sequence LLLLIAFFVAQLIATLIATYA. Residues 808-815 are Extracellular-facing; sequence HWEFARIK. Residues 816-836 form a helical membrane-spanning segment; sequence GCGWGWCGVIWIYSIVTYIPL. Residues 837 to 949 lie on the Cytoplasmic side of the membrane; that stretch reads DILKFITRYT…IDNLNQHYTV (113 aa). T883 carries the phosphothreonine modification. S931 bears the Phosphoserine mark. Positions 947-949 are interaction with 14-3-3 proteins; it reads YTV. Phosphothreonine is present on T948.

This sequence belongs to the cation transport ATPase (P-type) (TC 3.A.3) family. Type IIIA subfamily. Binds to 14-3-3 proteins. The binding is induced by phosphorylation of Thr-948. Binding to 14-3-3 proteins activates the H(+)-ATPase. Expressed in guard cells.

It localises to the membrane. The catalysed reaction is ATP + H2O + H(+)(in) = ADP + phosphate + 2 H(+)(out). Its function is as follows. The plasma membrane H(+) ATPase of plants and fungi generates a proton gradient that drives the active transport of nutrients by H(+)-symport. The resulting external acidification and/or internal alkinization may mediate growth responses. The protein is ATPase 6, plasma membrane-type (AHA6) of Arabidopsis thaliana (Mouse-ear cress).